We begin with the raw amino-acid sequence, 213 residues long: Outer-membrane lipoprotein carrier protein (213 aa).

Positions 1 to 23 are cleaved as a signal peptide; it reads MKKLLKQSLLGFALVSMTGAAFA.

The protein belongs to the LolA family. In terms of assembly, monomer.

The protein localises to the periplasm. Functionally, participates in the translocation of lipoproteins from the inner membrane to the outer membrane. Only forms a complex with a lipoprotein if the residue after the N-terminal Cys is not an aspartate (The Asp acts as a targeting signal to indicate that the lipoprotein should stay in the inner membrane). The polypeptide is Outer-membrane lipoprotein carrier protein (Actinobacillus pleuropneumoniae serotype 7 (strain AP76)).